Here is a 131-residue protein sequence, read N- to C-terminus: Large ribosomal subunit protein bL17 (131 aa).

Belongs to the bacterial ribosomal protein bL17 family. In terms of assembly, part of the 50S ribosomal subunit. Contacts protein L32.

The polypeptide is Large ribosomal subunit protein bL17 (Burkholderia ambifaria (strain MC40-6)).